The primary structure comprises 77 residues: Translation initiation factor IF-1, chloroplastic (77 aa).

Residues 1–72 form the S1-like domain; the sequence is MNKQGLFQME…TKGRIVYRQR (72 aa).

Belongs to the IF-1 family. In terms of assembly, component of the 30S ribosomal translation pre-initiation complex which assembles on the 30S ribosome in the order IF-2 and IF-3, IF-1 and N-formylmethionyl-tRNA(fMet); mRNA recruitment can occur at any time during PIC assembly.

Its subcellular location is the plastid. The protein localises to the chloroplast. Functionally, one of the essential components for the initiation of protein synthesis. Stabilizes the binding of IF-2 and IF-3 on the 30S subunit to which N-formylmethionyl-tRNA(fMet) subsequently binds. Helps modulate mRNA selection, yielding the 30S pre-initiation complex (PIC). Upon addition of the 50S ribosomal subunit IF-1, IF-2 and IF-3 are released leaving the mature 70S translation initiation complex. This chain is Translation initiation factor IF-1, chloroplastic, found in Nephroselmis olivacea (Green alga).